Consider the following 89-residue polypeptide: Small ribosomal subunit protein uS15 (89 aa).

It belongs to the universal ribosomal protein uS15 family. In terms of assembly, part of the 30S ribosomal subunit. Forms a bridge to the 50S subunit in the 70S ribosome, contacting the 23S rRNA.

Functionally, one of the primary rRNA binding proteins, it binds directly to 16S rRNA where it helps nucleate assembly of the platform of the 30S subunit by binding and bridging several RNA helices of the 16S rRNA. In terms of biological role, forms an intersubunit bridge (bridge B4) with the 23S rRNA of the 50S subunit in the ribosome. This Trichormus variabilis (strain ATCC 29413 / PCC 7937) (Anabaena variabilis) protein is Small ribosomal subunit protein uS15.